We begin with the raw amino-acid sequence, 2288 residues long: Protein Ycf2 (2288 aa).

1629–1636 (GSIGTGRS) is an ATP binding site.

Belongs to the Ycf2 family.

The protein resides in the plastid. The protein localises to the chloroplast stroma. In terms of biological role, probable ATPase of unknown function. Its presence in a non-photosynthetic plant (Epifagus virginiana) and experiments in tobacco indicate that it has an essential function which is probably not related to photosynthesis. This chain is Protein Ycf2, found in Phaseolus vulgaris (Kidney bean).